A 134-amino-acid chain; its full sequence is Small ribosomal subunit protein bS16 (134 aa).

The tract at residues 81–134 (LAKRPARSNPKKAEPGKKAQERLAAARQAEEEAKAAAEAAAAAPAEAPAEEAAS) is disordered. A compositionally biased stretch (basic and acidic residues) spans 91–101 (KKAEPGKKAQE). A compositionally biased stretch (low complexity) spans 116 to 134 (AAEAAAAAPAEAPAEEAAS).

It belongs to the bacterial ribosomal protein bS16 family.

In Chelativorans sp. (strain BNC1), this protein is Small ribosomal subunit protein bS16.